The chain runs to 569 residues: BTB/POZ domain-containing protein At3g50840 (569 aa).

The region spanning 18 to 87 (SDIEIEVDDI…SYGFKVDISV (70 aa)) is the BTB domain. Residues 194–459 (ELWFEDLTEL…VQVLFLEQLQ (266 aa)) form the NPH3 domain. Residues 240-259 (ISRSSSASSSSSSSSTTIAS) show a composition bias toward low complexity. Residues 240 to 261 (ISRSSSASSSSSSSSTTIASEN) form a disordered region. At Y400 the chain carries Phosphotyrosine.

Belongs to the NPH3 family.

The protein operates within protein modification; protein ubiquitination. In terms of biological role, may act as a substrate-specific adapter of an E3 ubiquitin-protein ligase complex (CUL3-RBX1-BTB) which mediates the ubiquitination and subsequent proteasomal degradation of target proteins. This chain is BTB/POZ domain-containing protein At3g50840, found in Arabidopsis thaliana (Mouse-ear cress).